The primary structure comprises 259 residues: 5'-nucleotidase SurE (259 aa).

4 residues coordinate a divalent metal cation: Asp-8, Asp-9, Ser-40, and Asn-92.

This sequence belongs to the SurE nucleotidase family. Requires a divalent metal cation as cofactor.

The protein resides in the cytoplasm. The enzyme catalyses a ribonucleoside 5'-phosphate + H2O = a ribonucleoside + phosphate. Its function is as follows. Nucleotidase that shows phosphatase activity on nucleoside 5'-monophosphates. The protein is 5'-nucleotidase SurE of Xanthomonas campestris pv. campestris (strain B100).